A 469-amino-acid polypeptide reads, in one-letter code: Zinc transporter SLC39A7 (469 aa).

The chain crosses the membrane as a helical span at residues 10–30; the sequence is WVAVGLLTWATLGLLVAGLGG. 2 stretches are compositionally biased toward basic and acidic residues: residues 42–56 and 66–114; these read FHGH…DFHH and HTHE…EHSH. Positions 42–121 are disordered; it reads FHGHSHRHSH…HSHGGYGESG (80 aa). His66 carries the post-translational modification Pros-methylhistidine. Transmembrane regions (helical) follow at residues 138–158, 169–189, and 214–234; these read ALGA…LIPV, LQIL…LHLI, and GPIL…LVVE. The span at 242 to 263 shows a compositional bias: basic residues; the sequence is GGHGHSHGHGHAHSHTRGSHGH. The disordered stretch occupies residues 242 to 310; the sequence is GGHGHSHGHG…VRPQNAEEEK (69 aa). A compositionally biased stretch (basic and acidic residues) spans 264-285; the sequence is GRQERSTKEKQSSEEEEKETRG. Residues Ser275 and Ser276 each carry the phosphoserine; by CK2 modification. Transmembrane regions (helical) follow at residues 381–401 and 417–436; these read MRLQ…ALLT and GWVL…VSVL.

It belongs to the ZIP transporter (TC 2.A.5) family. KE4/Catsup subfamily. Homodimer. In terms of processing, rapidly phosphorylated by CK2 following Zn(2+) treatment. This phosphorylation is required for efficient cytosolic Zn(2+) release. Methylation at some His residue by METTL9 leads to reduced zinc-binding. Widely expressed.

Its subcellular location is the endoplasmic reticulum membrane. It localises to the golgi apparatus. The protein localises to the cis-Golgi network membrane. It carries out the reaction Zn(2+)(in) = Zn(2+)(out). With respect to regulation, phosphorylation activates zinc transport activity. In terms of biological role, transports Zn(2+) from the endoplasmic reticulum (ER)/Golgi apparatus to the cytosol, playing an essential role in the regulation of cytosolic zinc levels. Acts as a gatekeeper of zinc release from intracellular stores, requiring post-translational activation by phosphorylation, resulting in activation of multiple downstream pathways leading to cell growth and proliferation. Has an essential role in B cell development and is required for proper B cell receptor signaling. Plays an important role in maintaining intestinal epithelial homeostasis and skin dermis development by regulating ER function. Controls cell signaling pathways involved in glucose metabolism in skeletal muscle. Has a protective role against ER stress in different biological contexts. Mediates Zn(2+)-induced ferroptosis. The polypeptide is Zinc transporter SLC39A7 (SLC39A7) (Homo sapiens (Human)).